The chain runs to 320 residues: o-succinylbenzoate synthase (320 aa).

The active-site Proton donor is the Lys133. Mg(2+) is bound by residues Asp161, Glu190, and Asp213. The active-site Proton acceptor is Lys235.

Belongs to the mandelate racemase/muconate lactonizing enzyme family. MenC type 1 subfamily. It depends on a divalent metal cation as a cofactor.

It catalyses the reaction (1R,6R)-6-hydroxy-2-succinyl-cyclohexa-2,4-diene-1-carboxylate = 2-succinylbenzoate + H2O. Its pathway is quinol/quinone metabolism; 1,4-dihydroxy-2-naphthoate biosynthesis; 1,4-dihydroxy-2-naphthoate from chorismate: step 4/7. It functions in the pathway quinol/quinone metabolism; menaquinone biosynthesis. Functionally, converts 2-succinyl-6-hydroxy-2,4-cyclohexadiene-1-carboxylate (SHCHC) to 2-succinylbenzoate (OSB). The chain is o-succinylbenzoate synthase from Escherichia coli O6:K15:H31 (strain 536 / UPEC).